Consider the following 170-residue polypeptide: Neurotensin/neuromedin N (170 aa).

An N-terminal signal peptide occupies residues 1-23; that stretch reads MMAGMKIQLVCMLLLAFSSWSLC. At glutamine 151 the chain carries Pyrrolidone carboxylic acid.

The protein belongs to the neurotensin family. As to quaternary structure, interacts with NTSR1. Interacts with SORT1. Interacts with SORL1. Neurotensin is cleaved and degraded by Angiotensin-converting enzyme (ACE) and neprilysin (MME).

The protein localises to the secreted. Its subcellular location is the cytoplasmic vesicle. It is found in the secretory vesicle. Neurotensin may play an endocrine or paracrine role in the regulation of fat metabolism. It causes contraction of smooth muscle. The protein is Neurotensin/neuromedin N (NTS) of Homo sapiens (Human).